The following is a 219-amino-acid chain: Orotate phosphoribosyltransferase (219 aa).

Lysine 26 provides a ligand contact to 5-phospho-alpha-D-ribose 1-diphosphate. 34-35 (FF) contacts orotate. 5-phospho-alpha-D-ribose 1-diphosphate-binding positions include 72–73 (YK), arginine 98, lysine 99, lysine 102, histidine 104, and 124–132 (DDVITAGTA). The orotate site is built by threonine 128 and arginine 156.

It belongs to the purine/pyrimidine phosphoribosyltransferase family. PyrE subfamily. Homodimer. The cofactor is Mg(2+).

The catalysed reaction is orotidine 5'-phosphate + diphosphate = orotate + 5-phospho-alpha-D-ribose 1-diphosphate. Its pathway is pyrimidine metabolism; UMP biosynthesis via de novo pathway; UMP from orotate: step 1/2. Functionally, catalyzes the transfer of a ribosyl phosphate group from 5-phosphoribose 1-diphosphate to orotate, leading to the formation of orotidine monophosphate (OMP). The chain is Orotate phosphoribosyltransferase from Stenotrophomonas maltophilia (strain K279a).